A 97-amino-acid chain; its full sequence is UPF0416 protein RC0826 (97 aa).

The first 33 residues, 1-33, serve as a signal peptide directing secretion; it reads MRIFVKAAISTAAWRFYAHPTVAMGICVGTALA.

The protein belongs to the UPF0416 family.

This Rickettsia conorii (strain ATCC VR-613 / Malish 7) protein is UPF0416 protein RC0826.